Here is a 540-residue protein sequence, read N- to C-terminus: Peptide chain release factor 3 (540 aa).

The tr-type G domain maps to 14–283 (ELRRNFAIIS…YFLNYALKPG (270 aa)). GTP is bound by residues 23 to 30 (SHPDAGKT), 91 to 95 (DTPGH), and 145 to 148 (NKLD).

It belongs to the TRAFAC class translation factor GTPase superfamily. Classic translation factor GTPase family. PrfC subfamily.

It is found in the cytoplasm. In terms of biological role, increases the formation of ribosomal termination complexes and stimulates activities of RF-1 and RF-2. It binds guanine nucleotides and has strong preference for UGA stop codons. It may interact directly with the ribosome. The stimulation of RF-1 and RF-2 is significantly reduced by GTP and GDP, but not by GMP. This chain is Peptide chain release factor 3, found in Trichormus variabilis (strain ATCC 29413 / PCC 7937) (Anabaena variabilis).